A 352-amino-acid chain; its full sequence is Putative conjugal transfer protein MT3759 (352 aa).

160–167 is an ATP binding site; that stretch reads GGTGAGKT.

The protein belongs to the GSP E family.

It localises to the cytoplasm. This is Putative conjugal transfer protein MT3759 from Mycobacterium tuberculosis (strain CDC 1551 / Oshkosh).